The sequence spans 289 residues: D-psicose 3-epimerase (289 aa).

Substrate contacts are provided by Y6 and A107. The active-site Proton donor/acceptor is the E150. E150 contributes to the Mn(2+) binding site. Substrate contacts are provided by residues E156 and 183–186 (DTFH). Mn(2+) contacts are provided by D183 and H209. R215 provides a ligand contact to substrate. The active-site Proton donor/acceptor is E244. E244 is a Mn(2+) binding site.

The protein belongs to the hyi family. As to quaternary structure, homotetramer. The cofactor is Mn(2+). It depends on Co(2+) as a cofactor.

It catalyses the reaction D-allulose = keto-D-fructose. Its activity is regulated as follows. Inhibited by Zn(2+) and Cu(2+). Functionally, involved in the biosynthesis of D-psicose. Catalyzes the reversible epimerization of D-fructose at the C3 position to yield D-psicose. The enzyme is highly specific for D-psicose and shows very low activity with D-tagatose. The substrate specificity decreases in the following order: D-fructose, D-tagatose, D-ribulose, D-xylulose, and D-sorbose. It shows a higher level of activity for cis ketoses than for trans-ketoses. The protein is D-psicose 3-epimerase (dpe) of Agrobacterium fabrum (strain C58 / ATCC 33970) (Agrobacterium tumefaciens (strain C58)).